The sequence spans 356 residues: Ferredoxin--NADP reductase (356 aa).

FAD contacts are provided by Thr25, Glu44, Gln52, Tyr57, Val97, Phe132, Asp298, and Ser339.

The protein belongs to the ferredoxin--NADP reductase type 2 family. Homodimer. FAD serves as cofactor.

It carries out the reaction 2 reduced [2Fe-2S]-[ferredoxin] + NADP(+) + H(+) = 2 oxidized [2Fe-2S]-[ferredoxin] + NADPH. The sequence is that of Ferredoxin--NADP reductase from Chlorobaculum parvum (strain DSM 263 / NCIMB 8327) (Chlorobium vibrioforme subsp. thiosulfatophilum).